Here is a 144-residue protein sequence, read N- to C-terminus: Large ribosomal subunit protein uL15 (144 aa).

The segment at 1–57 (MELNNLKPAEGSKHAKRRVGRGIGSGLGKTAGRGHKGQKSRSGGFHKVGFEGGQMPL) is disordered. The segment covering 21–31 (RGIGSGLGKTA) has biased composition (gly residues).

It belongs to the universal ribosomal protein uL15 family. Part of the 50S ribosomal subunit.

Functionally, binds to the 23S rRNA. This Paraburkholderia phytofirmans (strain DSM 17436 / LMG 22146 / PsJN) (Burkholderia phytofirmans) protein is Large ribosomal subunit protein uL15.